The sequence spans 164 residues: UBA-like domain-containing protein 2 (164 aa).

Serine 2 bears the N-acetylserine mark. Residues serine 128–arginine 164 are disordered. Low complexity predominate over residues glycine 146–arginine 164.

This sequence belongs to the UBALD family.

The polypeptide is UBA-like domain-containing protein 2 (UBALD2) (Homo sapiens (Human)).